The following is an 87-amino-acid chain: Large ribosomal subunit protein bL27 (87 aa).

The segment at 1–21 (MAHKKAGGSSRNGRDSESKRL) is disordered.

The protein belongs to the bacterial ribosomal protein bL27 family.

The sequence is that of Large ribosomal subunit protein bL27 from Burkholderia ambifaria (strain MC40-6).